Consider the following 85-residue polypeptide: MKIIIFLIVSSLMLIGVKTDNGYLLNKATGCKVWCVINNASCNSECKLRRGNYGYCYFWKLACYCEGAPKSELWAYATNKCNGKL.

The first 19 residues, 1-19 (MKIIIFLIVSSLMLIGVKT), serve as a signal peptide directing secretion. The 63-residue stretch at 20–82 (DNGYLLNKAT…LWAYATNKCN (63 aa)) folds into the LCN-type CS-alpha/beta domain. Disulfide bonds link Cys31–Cys81, Cys35–Cys56, Cys42–Cys63, and Cys46–Cys65.

It belongs to the long (4 C-C) scorpion toxin superfamily. Sodium channel inhibitor family. As to expression, expressed by the venom gland.

The protein resides in the secreted. Beta toxins bind voltage-independently at site-4 of sodium channels (Nav) and shift the voltage of activation toward more negative potentials thereby affecting sodium channel activation and promoting spontaneous and repetitive firing. Competes, with apparent high affinity, with anti-insect and anti-mammalian beta-toxins for binding to cockroach and rat brain synaptosomes, respectively. Also competes with an anti-mammalian alpha-toxin on binding to rat brain sodium channels. Has a weak effect on cardiac sodium channels and a marked effect on rat brain and skeletal muscle sodium channels. This chain is Beta-mammal/insect toxin Lqhb1, found in Leiurus hebraeus (Hebrew deathstalker scorpion).